A 221-amino-acid polypeptide reads, in one-letter code: Pleckstrin homology domain-containing family B member 2 (221 aa).

Residues 2 to 109 (AFVKSGWLLR…WKFTLQDSRT (108 aa)) form the PH domain. A 1,2-diacyl-sn-glycero-3-phospho-L-serine is bound at residue Lys-20.

As to expression, highly expressed in brain, retina, heart and kidney. Detected at lower levels in lung, muscle and nerve.

It is found in the recycling endosome membrane. Involved in retrograde transport of recycling endosomes. The chain is Pleckstrin homology domain-containing family B member 2 (Plekhb2) from Mus musculus (Mouse).